The primary structure comprises 522 residues: MKPIARALISVSDKTGIVPFAHRLQARGVKILSTGGSAQLLQKNNIGATEISTYTGFPEMMGGRIKTLHPKIHGGILGRRETDATTMAEYNIAPIDLVAVNLYPFEQTVAKPDCDLATAIENIDIGGPTLLRAAAKNHAAVTVIVDPDDYERVLREMEANGGALSSSTRFELAVKSFEHTARYDATIANYLGALTPNGEKSAFPRSYNIQFAKKQEMRYGENPHQRAAFYVEQPPPAGTIATAQQLQGKTLSFNNIADTDAALACVKAFREAPTCVIVKHANPCGVATGINLQEAYERAYAADPVSAFGGIIAFNEPLDPTTAKTIIKRQFAEVIIAPAVTTTAQEILTSKPNIRVLACGEWSSQTAAGWDYKRIVGGLLLQDQDTDTVPLEALQTVTERSPTPQELKDLLFAWQVVKFVKSNAIVYAKNGRTIGVGAGQTSRVMSSQIAELKAKEAGFSTQNAVLASDAFFPFRDGLEAAAKAGICAVIQPGGSRRDKEVIAAANEWDMAMLFTGMRHFRH.

The 145-residue stretch at 1 to 145 (MKPIARALIS…KNHAAVTVIV (145 aa)) folds into the MGS-like domain.

The protein belongs to the PurH family.

The enzyme catalyses (6R)-10-formyltetrahydrofolate + 5-amino-1-(5-phospho-beta-D-ribosyl)imidazole-4-carboxamide = 5-formamido-1-(5-phospho-D-ribosyl)imidazole-4-carboxamide + (6S)-5,6,7,8-tetrahydrofolate. The catalysed reaction is IMP + H2O = 5-formamido-1-(5-phospho-D-ribosyl)imidazole-4-carboxamide. Its pathway is purine metabolism; IMP biosynthesis via de novo pathway; 5-formamido-1-(5-phospho-D-ribosyl)imidazole-4-carboxamide from 5-amino-1-(5-phospho-D-ribosyl)imidazole-4-carboxamide (10-formyl THF route): step 1/1. The protein operates within purine metabolism; IMP biosynthesis via de novo pathway; IMP from 5-formamido-1-(5-phospho-D-ribosyl)imidazole-4-carboxamide: step 1/1. In Nitrosococcus oceani (strain ATCC 19707 / BCRC 17464 / JCM 30415 / NCIMB 11848 / C-107), this protein is Bifunctional purine biosynthesis protein PurH.